We begin with the raw amino-acid sequence, 309 residues long: Tumor necrosis factor ligand superfamily member 9 (309 aa).

The segment covering 1–16 has biased composition (basic and acidic residues); the sequence is MDQHTLDVEDTADARH. The segment at 1–20 is disordered; the sequence is MDQHTLDVEDTADARHPAGT. Over 1-82 the chain is Cytoplasmic; sequence MDQHTLDVED…ALNFCSRHPK (82 aa). A helical; Signal-anchor for type II membrane protein membrane pass occupies residues 83–103; the sequence is LYGLVALVLLLLIAACVPIFT. Topologically, residues 104-309 are extracellular; it reads RTEPRPALTI…FLVKPDNPWE (206 aa). Residues Asn-139, Asn-161, and Asn-293 are each glycosylated (N-linked (GlcNAc...) asparagine). One can recognise a THD domain in the interval 147 to 302; that stretch reads VFAKLLAKNQ…NTTSFGLFLV (156 aa).

The protein belongs to the tumor necrosis factor family. As to quaternary structure, homotrimer.

Its subcellular location is the membrane. Functionally, cytokine that binds to TNFRSF9. Induces the proliferation of activated peripheral blood T-cells. May have a role in activation-induced cell death (AICD). May play a role in cognate interactions between T-cells and B-cells/macrophages. This Mus musculus (Mouse) protein is Tumor necrosis factor ligand superfamily member 9 (Tnfsf9).